Consider the following 126-residue polypeptide: Large ribosomal subunit protein bL12 (126 aa).

Belongs to the bacterial ribosomal protein bL12 family. As to quaternary structure, homodimer. Part of the ribosomal stalk of the 50S ribosomal subunit. Forms a multimeric L10(L12)X complex, where L10 forms an elongated spine to which 2 to 4 L12 dimers bind in a sequential fashion. Binds GTP-bound translation factors.

Forms part of the ribosomal stalk which helps the ribosome interact with GTP-bound translation factors. Is thus essential for accurate translation. This Rhizobium meliloti (strain 1021) (Ensifer meliloti) protein is Large ribosomal subunit protein bL12.